The sequence spans 143 residues: Submaxillary gland androgen-regulated protein 2, isoform delta (143 aa).

Positions Met-1 to Cys-22 are cleaved as a signal peptide. Disordered regions lie at residues Gly-28–Asn-52 and Val-116–Phe-143. 2 stretches are compositionally biased toward polar residues: residues Leu-36–Phe-45 and Asn-122–Phe-143.

The protein resides in the secreted. Its function is as follows. May play a role in protection or detoxification. The sequence is that of Submaxillary gland androgen-regulated protein 2, isoform delta (Smr2) from Mus musculus (Mouse).